The following is a 466-amino-acid chain: Chromosomal replication initiator protein DnaA (466 aa).

The interval Met1–Ala85 is domain I, interacts with DnaA modulators. The segment at Pro82–Leu122 is disordered. Over residues Ala85 to Leu122 the composition is skewed to polar residues. Residues Ala85–Ser129 form a domain II region. The interval Asn130–Ala346 is domain III, AAA+ region. Gly174, Gly176, Lys177, and Thr178 together coordinate ATP. Residues Asn347–Ser466 form a domain IV, binds dsDNA region.

Belongs to the DnaA family. As to quaternary structure, oligomerizes as a right-handed, spiral filament on DNA at oriC.

Its subcellular location is the cytoplasm. In terms of biological role, plays an essential role in the initiation and regulation of chromosomal replication. ATP-DnaA binds to the origin of replication (oriC) to initiate formation of the DNA replication initiation complex once per cell cycle. Binds the DnaA box (a 9 base pair repeat at the origin) and separates the double-stranded (ds)DNA. Forms a right-handed helical filament on oriC DNA; dsDNA binds to the exterior of the filament while single-stranded (ss)DNA is stabiized in the filament's interior. The ATP-DnaA-oriC complex binds and stabilizes one strand of the AT-rich DNA unwinding element (DUE), permitting loading of DNA polymerase. After initiation quickly degrades to an ADP-DnaA complex that is not apt for DNA replication. Binds acidic phospholipids. This is Chromosomal replication initiator protein DnaA from Proteus mirabilis (strain HI4320).